A 192-amino-acid polypeptide reads, in one-letter code: dTTP/UTP pyrophosphatase (192 aa).

The active-site Proton acceptor is aspartate 72.

Belongs to the Maf family. YhdE subfamily. A divalent metal cation serves as cofactor.

The protein resides in the cytoplasm. It carries out the reaction dTTP + H2O = dTMP + diphosphate + H(+). The enzyme catalyses UTP + H2O = UMP + diphosphate + H(+). Nucleoside triphosphate pyrophosphatase that hydrolyzes dTTP and UTP. May have a dual role in cell division arrest and in preventing the incorporation of modified nucleotides into cellular nucleic acids. This is dTTP/UTP pyrophosphatase from Geobacter metallireducens (strain ATCC 53774 / DSM 7210 / GS-15).